Reading from the N-terminus, the 123-residue chain is Histone H2B (123 aa).

The segment at 1-31 (MPPKTSGKAAKKAGKAQKNITKNDKKKKRKR) is disordered. N-methylproline; partial is present on Pro-2. Lys-44 is subject to N6-succinyllysine. O-linked (GlcNAc) serine glycosylation is present at Ser-110. Lys-114 and Lys-118 each carry N6-succinyllysine. Lys-118 participates in a covalent cross-link: Glycyl lysine isopeptide (Lys-Gly) (interchain with G-Cter in ubiquitin).

This sequence belongs to the histone H2B family. The nucleosome is a histone octamer containing two molecules each of H2A, H2B, H3 and H4 assembled in one H3-H4 heterotetramer and two H2A-H2B heterodimers. The octamer wraps approximately 147 bp of DNA. Phosphorylated by the catalytic component of the Dbf4-dependent kinase (DDK) complex Cdc7. In terms of processing, monoubiquitination of Lys-118 by Bre1 gives a specific tag for epigenetic transcriptional activation and is also prerequisite for histone H3 'Lys-4' and 'Lys-79' methylation. Deubiquitination of Lys-118 by the SAGA complex is involved in activating transcription of a large subset of genes. Post-translationally, methylation at Pro-2 increases upon heat shock. GlcNAcylation at Ser-110 promotes monoubiquitination of Lys-118. It fluctuates in response to extracellular glucose, and associates with transcribed genes.

It is found in the nucleus. The protein localises to the chromosome. Functionally, core component of nucleosome. Nucleosomes wrap and compact DNA into chromatin, limiting DNA accessibility to the cellular machineries which require DNA as a template. Histones thereby play a central role in transcription regulation, DNA repair, DNA replication and chromosomal stability. DNA accessibility is regulated via a complex set of post-translational modifications of histones, also called histone code, and nucleosome remodeling. This is Histone H2B (His2B) from Drosophila sechellia (Fruit fly).